The sequence spans 808 residues: uncharacterized protein (808 aa).

Residue 35 to 42 (GPNNVGKT) participates in ATP binding.

This is an uncharacterized protein from Methanocaldococcus jannaschii (strain ATCC 43067 / DSM 2661 / JAL-1 / JCM 10045 / NBRC 100440) (Methanococcus jannaschii).